The chain runs to 275 residues: Methylglyoxal reductase DkgA (275 aa).

Catalysis depends on Tyr51, which acts as the Proton donor. Residue His107 coordinates substrate. 187 to 241 provides a ligand contact to NADP(+); it reads SPLAQGGKGVFDQKVIRDLADKYGKTPAQIVIRWHLDSGLVVIPKSVTPSRIAEN.

Belongs to the aldo/keto reductase family. Monomer.

The protein resides in the cytoplasm. The enzyme catalyses hydroxyacetone + NADP(+) = methylglyoxal + NADPH + H(+). Its function is as follows. Aldo-keto reductase that significantly contributes to cellular methylglyoxal detoxification by catalyzing the NADPH-dependent conversion of methylglyoxal to acetol. This chain is Methylglyoxal reductase DkgA, found in Escherichia coli O157:H7.